A 189-amino-acid polypeptide reads, in one-letter code: Interferon alpha-1 (189 aa).

Residues 1–23 form the signal peptide; that stretch reads MARLCAFLMVLAVLSYWPTCSLG. 2 cysteine pairs are disulfide-bonded: C24/C122 and C52/C162. N101 carries N-linked (GlcNAc...) asparagine glycosylation.

This sequence belongs to the alpha/beta interferon family. In terms of assembly, interacts with CR2. Post-translationally, glycosylated.

It localises to the secreted. In terms of biological role, produced by macrophages, IFN-alpha have antiviral activities. Interferon stimulates the production of two enzymes: a protein kinase and an oligoadenylate synthetase. This chain is Interferon alpha-1 (Ifna1), found in Mus musculus (Mouse).